The sequence spans 264 residues: Probable transcriptional regulatory protein PPA1157 (264 aa).

The protein belongs to the TACO1 family.

The protein localises to the cytoplasm. This is Probable transcriptional regulatory protein PPA1157 from Cutibacterium acnes (strain DSM 16379 / KPA171202) (Propionibacterium acnes).